A 264-amino-acid chain; its full sequence is [LysW]-aminoadipate/[LysW]-glutamate kinase (264 aa).

Substrate is bound by residues 35–36 (GG), arginine 62, and asparagine 167.

Belongs to the acetylglutamate kinase family. LysZ subfamily.

The protein resides in the cytoplasm. The catalysed reaction is [amino-group carrier protein]-C-terminal-N-(1,4-dicarboxybutan-1-yl)-L-glutamine + ATP = [amino-group carrier protein]-C-terminal-N-(1-carboxy-5-phosphooxy-5-oxopentan-1-yl)-L-glutamine + ADP. It catalyses the reaction [amino-group carrier protein]-C-terminal-gamma-(L-glutamyl)-L-glutamate + ATP = [amino-group carrier protein]-C-terminal-gamma-(5-phospho-L-glutamyl)-L-glutamate + ADP. Its pathway is amino-acid biosynthesis; L-lysine biosynthesis via AAA pathway; L-lysine from L-alpha-aminoadipate (Thermus route): step 2/5. The protein operates within amino-acid biosynthesis; L-arginine biosynthesis. In terms of biological role, involved in both the arginine and lysine biosynthetic pathways. Phosphorylates the LysW-bound precursors glutamate (for arginine biosynthesis), respectively alpha-aminoadipate (for lysine biosynthesis). This is [LysW]-aminoadipate/[LysW]-glutamate kinase from Saccharolobus solfataricus (strain ATCC 35092 / DSM 1617 / JCM 11322 / P2) (Sulfolobus solfataricus).